We begin with the raw amino-acid sequence, 233 residues long: Lipoprotein-releasing system ATP-binding protein LolD (233 aa).

The region spanning 9–233 (LAINAVSKVF…GILSQSETHR (225 aa)) is the ABC transporter domain. Residue 45-52 (GSSGSGKS) coordinates ATP.

The protein belongs to the ABC transporter superfamily. Lipoprotein translocase (TC 3.A.1.125) family. As to quaternary structure, the complex is composed of two ATP-binding proteins (LolD) and two transmembrane proteins (LolC and LolE).

It is found in the cell inner membrane. Functionally, part of the ABC transporter complex LolCDE involved in the translocation of mature outer membrane-directed lipoproteins, from the inner membrane to the periplasmic chaperone, LolA. Responsible for the formation of the LolA-lipoprotein complex in an ATP-dependent manner. The protein is Lipoprotein-releasing system ATP-binding protein LolD of Shewanella denitrificans (strain OS217 / ATCC BAA-1090 / DSM 15013).